The chain runs to 170 residues: MGVDQPLGDSFITASLDGLVNWARKSSIWPMTFGLACCAIEMMATGASHNDLDRFGIIFRASPRQADCIIIAGTVTKKMLPVIQTVYEQMPEPKWVVAMGACACSGGVFDTYSVVQGIDEALPVDVYIPGCPPRPEALLYGLIKLQDKIMKDKNSFGSTIGLGQRLESAA.

The [4Fe-4S] cluster site is built by Cys-37, Cys-38, Cys-102, and Cys-131.

Belongs to the complex I 20 kDa subunit family. In terms of assembly, NDH-1 is composed of 14 different subunits. Subunits NuoB, C, D, E, F, and G constitute the peripheral sector of the complex. It depends on [4Fe-4S] cluster as a cofactor.

Its subcellular location is the cell inner membrane. It catalyses the reaction a quinone + NADH + 5 H(+)(in) = a quinol + NAD(+) + 4 H(+)(out). Functionally, NDH-1 shuttles electrons from NADH, via FMN and iron-sulfur (Fe-S) centers, to quinones in the respiratory chain. The immediate electron acceptor for the enzyme in this species is believed to be ubiquinone. Couples the redox reaction to proton translocation (for every two electrons transferred, four hydrogen ions are translocated across the cytoplasmic membrane), and thus conserves the redox energy in a proton gradient. This is NADH-quinone oxidoreductase subunit B from Geobacter metallireducens (strain ATCC 53774 / DSM 7210 / GS-15).